The sequence spans 1477 residues: MEVKEEKLMEEKQRLPEKTIPVFTVLKNGAILKNIFVVNSRDFSSPERNGSTVSDDDGEVEEILVVGRHPDCDILLTHPSISRFHLEIRSISSRQKLFVTDLSSVHGTWVRDLRIEPHGCVEVEEGDTIRIGGSTRIYRLHWIPLSRAYDLDNPFVSPLDASTVLEQEEENRMLEAENLEVAQHQSLENTTSGDEGVLHLDVTSEGTGSSVPSEDEDTYVTTREMSMPVASPSVLTLVRDSVETQKLQFNEDLQTSPKWDLDVIESVAEKLSGSFVRSTQQSGGDVEGLGCSELFDAAEADECDVRGDGGLHLNVISEKMESSVPNMIEAENLEVAQHQSLANTALGDDEDLHLDVTSEGTGSSVPSEDEDTYITTMEISVPLASPNVLTLARDSIKTQKLQSTQDFQTPTMWDLDVVEAAAEKPSSSCVLGKKLSGGYVEELGCFELFVAAEADKCDVRGDGSLHLNEISERMESSMSNKEDDPFLAAKETSSLPLSTDFINPETLWLVEDVQASPEFCTSSVKANAENPSSGCSPSTEQIDGCFETSGCSAFDLAAEVESLSLHQEVSEETEFVTKEVMGVSSEPLGKADIRSHEENGESEDSRQVIEVSAEPVAKADIQSHEENGETEGSRQVIEVSPKSFSEAEPTIEILTGEAQGIIGSEFPSELAVETESENLLHQKSIGETKNEIRSHEDYGETEDYGETECSWPDIAVSPSSVSPPEPTLEILTDEARGLLGSEFLSEVTVETEIENLLHQKSNVETKADILIHEDYGETEVSRQIITVSPNSFSKAEPTLETEDSRQQARGLVGSDSEFQSEVAMKTECENLLNQKRNGETKVSSRQASPVSDCLSTPKDRLSSINTDDIQSLCSSSQPPSESEVNPATDQDQESGIISETEKPKTELLIGSGRSEKYYSLSEIEGEENTDIGRLSRCPIPSALAAKTSEDTKLIEELSSSDSGSQENQTPETHAVRDDVLCDMDSSSTCNIWSRRGKAASVLKIRTNKSQGKQKQTGRQPKDKLHRKQALSDKSISLTIHHGAEILEPEIFTPDKENLTPSSHMLKRLQDIGDVKDSKSSLKLSGKSCSSLVHSSIAVLASEAFTEPEIFTPDKENLTPSSHMLKRLREFGDIKDTKGSSSKATRKPFFDIRMEENVMVEQEPEDLHSLGSKSKLKHEPLAPKKKAERAPFQPLLEKSSFQSQSYTEASSTASARNNISRGIRSSSNLSDAKSKMKWTIVLDTSSLLDKESRKPLQLLQGLKGTHLVVPRTVLRELNEVKRSRSFLFRRRTEIASSALDWIEECKVNSKWWIQVQSPTEETKAIAPTPPVTPQSNGSSAFPFSLHWNNYAPEIDSPTSEDQVLECALLYRNRNRDEKLVLLSNDVTLKIKAMAEGVICETPHEFYESLVNPFSERFMWTESTARGRTWSHLDNDVLRERYNDRACRRKSTYNRGESGAAAKGLKLILLHNSHYGHTH.

Positions 64 to 115 (LVVGRHPDCDILLTHPSISRFHLEIRSISSRQKLFVTDLSSVHGTWVRDLRI) constitute an FHA domain. Disordered stretches follow at residues 188–218 (ENTT…DEDT), 588–644 (LGKA…PKSF), 789–818 (PNSF…DSEF), 832–911 (LNQK…LIGS), 942–979 (ALAA…RDDV), 1004–1030 (IRTN…KQAL), and 1159–1225 (VEQE…IRSS). Over residues 589–607 (GKADIRSHEENGESEDSRQ) the composition is skewed to basic and acidic residues. Polar residues predominate over residues 832-849 (LNQKRNGETKVSSRQASP). The span at 870 to 883 (QSLCSSSQPPSESE) shows a compositional bias: low complexity. Composition is skewed to polar residues over residues 885-897 (NPAT…SGII), 957-971 (LSSS…QTPE), 1007-1018 (NKSQGKQKQTGR), and 1198-1212 (SSFQ…SSTA). The segment covering 1213 to 1225 (SARNNISRGIRSS) has biased composition (low complexity).

Required for normal spindle orientation at male meiosis II and normal formation of tetrad of microspores. Not involved in female meiosis. This chain is FHA domain-containing protein PS1, found in Arabidopsis thaliana (Mouse-ear cress).